We begin with the raw amino-acid sequence, 344 residues long: MSNPILLGIFWHFIGAASAACFYAPFKQVKNWSWETMWSLGGFFSWIILPWCISWWLLPDFWRYYGSFDMATLLPIFLFGAMWGIGNINYGLTMRYLSMSMGIGIAIGVTLIIGTLMTPVLQGKFSVLFGSAGGRMTLLGVLVAVIGVAIVSYAGLLKERVLGIRAEEFNLKKGLILAVMCGIFSAGMSFAMDAAKPMHAAAQAQGINALYVALPSYVVIMGGGAVVNLGFCFMRLATCKGISLKADLAQAKPLLIANALFAILGGVMWYLQFFFYAWGHANIPADYTYISWMLHMSFYVLCGGIVGLLFKEWKSVGQKPVRTLVLGCMVIILAANVVGLGMAA.

Helical transmembrane passes span 4–24 (PILL…CFYA), 38–58 (WSLG…WWLL), 68–88 (FDMA…IGNI), 101–121 (MGIG…TPVL), 137–157 (TLLG…AGLL), 175–195 (LILA…MDAA), 207–227 (INAL…GAVV), 255–275 (LIAN…QFFF), 290–310 (ISWM…GLLF), and 324–344 (LVLG…GMAA).

It belongs to the L-rhamnose transporter (TC 2.A.7.6) family.

The protein resides in the cell inner membrane. The catalysed reaction is L-rhamnopyranose(in) + H(+)(in) = L-rhamnopyranose(out) + H(+)(out). Functionally, uptake of L-rhamnose across the cytoplasmic membrane with the concomitant transport of protons into the cell (symport system). This chain is L-rhamnose-proton symporter, found in Pectobacterium carotovorum subsp. carotovorum (strain PC1).